Reading from the N-terminus, the 539-residue chain is Hydroxylamine reductase (539 aa).

[4Fe-4S] cluster-binding residues include Cys-3, Cys-6, Cys-15, and Cys-21. Positions 235, 259, 303, 394, 422, 447, 482, and 484 each coordinate hybrid [4Fe-2O-2S] cluster. Cys-394 carries the cysteine persulfide modification.

The protein belongs to the HCP family. [4Fe-4S] cluster serves as cofactor. It depends on hybrid [4Fe-2O-2S] cluster as a cofactor.

The protein resides in the cytoplasm. The catalysed reaction is A + NH4(+) + H2O = hydroxylamine + AH2 + H(+). Its function is as follows. Catalyzes the reduction of hydroxylamine to form NH(3) and H(2)O. This Methanocaldococcus jannaschii (strain ATCC 43067 / DSM 2661 / JAL-1 / JCM 10045 / NBRC 100440) (Methanococcus jannaschii) protein is Hydroxylamine reductase.